Consider the following 235-residue polypeptide: Non-structural maintenance of chromosomes element 1 homolog (235 aa).

The RING-type; atypical zinc-finger motif lies at I181–L225. T185 carries the phosphothreonine modification.

This sequence belongs to the NSE1 family. In terms of assembly, component of the Smc5-Smc6 complex which consists at least of Smc5, Smc6, Nse1, Nse2, Nse4 and MAGE. Nse1, Nse4 and MAGE probably form a subcomplex that bridges the head domains of the Smc5-Smc6 heterodimer. Interacts with MAGE and Nse4.

It localises to the nucleus. The enzyme catalyses S-ubiquitinyl-[E2 ubiquitin-conjugating enzyme]-L-cysteine + [acceptor protein]-L-lysine = [E2 ubiquitin-conjugating enzyme]-L-cysteine + N(6)-ubiquitinyl-[acceptor protein]-L-lysine.. In terms of biological role, component of the SMC5-SMC6 complex, a complex involved in repair of DNA double-strand breaks by homologous recombination. The complex may promote sister chromatid homologous recombination by recruiting the SMC1-SMC3 cohesin complex to double-strand breaks. The protein is Non-structural maintenance of chromosomes element 1 homolog of Drosophila melanogaster (Fruit fly).